Consider the following 796-residue polypeptide: Endonuclease MutS2 (796 aa).

Residue 339–346 (GPNTGGKT) coordinates ATP. A disordered region spans residues 620–644 (EKLGDTDSSLVSKAKKNRKQHKPSD). Residues 721–796 (LNIIGKRVDE…DHGVTIVEFK (76 aa)) form the Smr domain.

The protein belongs to the DNA mismatch repair MutS family. MutS2 subfamily. As to quaternary structure, homodimer. Binds to stalled ribosomes, contacting rRNA.

Functionally, endonuclease that is involved in the suppression of homologous recombination and thus may have a key role in the control of bacterial genetic diversity. Its function is as follows. Acts as a ribosome collision sensor, splitting the ribosome into its 2 subunits. Detects stalled/collided 70S ribosomes which it binds and splits by an ATP-hydrolysis driven conformational change. Acts upstream of the ribosome quality control system (RQC), a ribosome-associated complex that mediates the extraction of incompletely synthesized nascent chains from stalled ribosomes and their subsequent degradation. Probably generates substrates for RQC. The protein is Endonuclease MutS2 of Lachnoclostridium phytofermentans (strain ATCC 700394 / DSM 18823 / ISDg) (Clostridium phytofermentans).